The sequence spans 440 residues: Transposon Ty1-DR2 Gag polyprotein (440 aa).

2 stretches are compositionally biased toward polar residues: residues 1-31 (MESQQLSQHSPISHGSACASVTSKEVQTTQD) and 137-168 (VGTHLNTPSPESGNSFPDSSSAKSNMTSTNQH). 3 disordered regions span residues 1-75 (MESQ…PQAA), 137-174 (VGTHLNTPSPESGNSFPDSSSAKSNMTSTNQHVRPPPI), and 350-440 (QQES…PGTY). Residues 299–401 (NNGIPINNKV…NSQSRTARAH (103 aa)) form an RNA-binding region. Basic and acidic residues predominate over residues 363–372 (SPSDEKKDSR). Residues 373–409 (TYTNTTKPKSITRNSQKPNNSQSRTARAHNVSTSNNF) are compositionally biased toward polar residues. Basic and acidic residues predominate over residues 429 to 440 (NKHDLHLRPGTY).

In terms of assembly, homotrimer.

The protein localises to the cytoplasm. Functionally, capsid protein (CA) is the structural component of the virus-like particle (VLP), forming the shell that encapsulates the retrotransposons dimeric RNA genome. The particles are assembled from trimer-clustered units and there are holes in the capsid shells that allow for the diffusion of macromolecules. CA also has nucleocapsid-like chaperone activity, promoting primer tRNA(i)-Met annealing to the multipartite primer-binding site (PBS), dimerization of Ty1 RNA and initiation of reverse transcription. The sequence is that of Transposon Ty1-DR2 Gag polyprotein (TY1A-DR2) from Saccharomyces cerevisiae (strain ATCC 204508 / S288c) (Baker's yeast).